The sequence spans 214 residues: tRNA (guanine-N(7)-)-methyltransferase (214 aa).

Residues E44, E69, D96, and D118 each coordinate S-adenosyl-L-methionine. Residue D118 is part of the active site. Substrate contacts are provided by residues K122, D154, and 191 to 194 (TEYE).

It belongs to the class I-like SAM-binding methyltransferase superfamily. TrmB family.

The catalysed reaction is guanosine(46) in tRNA + S-adenosyl-L-methionine = N(7)-methylguanosine(46) in tRNA + S-adenosyl-L-homocysteine. Its pathway is tRNA modification; N(7)-methylguanine-tRNA biosynthesis. Functionally, catalyzes the formation of N(7)-methylguanine at position 46 (m7G46) in tRNA. This Listeria monocytogenes serotype 4b (strain F2365) protein is tRNA (guanine-N(7)-)-methyltransferase.